The primary structure comprises 194 residues: Orotate phosphoribosyltransferase (194 aa).

Residues Arg-102, Lys-103, Lys-106, His-108, and 129–137 (EDVVTTGGS) contribute to the 5-phospho-alpha-D-ribose 1-diphosphate site. 2 residues coordinate orotate: Thr-133 and Arg-161.

It belongs to the purine/pyrimidine phosphoribosyltransferase family. PyrE subfamily. In terms of assembly, homodimer. Requires Mg(2+) as cofactor.

It catalyses the reaction orotidine 5'-phosphate + diphosphate = orotate + 5-phospho-alpha-D-ribose 1-diphosphate. The protein operates within pyrimidine metabolism; UMP biosynthesis via de novo pathway; UMP from orotate: step 1/2. Functionally, catalyzes the transfer of a ribosyl phosphate group from 5-phosphoribose 1-diphosphate to orotate, leading to the formation of orotidine monophosphate (OMP). The chain is Orotate phosphoribosyltransferase from Synechococcus sp. (strain CC9902).